A 317-amino-acid polypeptide reads, in one-letter code: Acetyl-coenzyme A carboxylase carboxyl transferase subunit alpha (317 aa).

Positions 40 to 294 (RLQKKSEELT…KQQILADLQD (255 aa)) constitute a CoA carboxyltransferase C-terminal domain.

Belongs to the AccA family. Acetyl-CoA carboxylase is a heterohexamer composed of biotin carboxyl carrier protein (AccB), biotin carboxylase (AccC) and two subunits each of ACCase subunit alpha (AccA) and ACCase subunit beta (AccD).

It is found in the cytoplasm. The catalysed reaction is N(6)-carboxybiotinyl-L-lysyl-[protein] + acetyl-CoA = N(6)-biotinyl-L-lysyl-[protein] + malonyl-CoA. Its pathway is lipid metabolism; malonyl-CoA biosynthesis; malonyl-CoA from acetyl-CoA: step 1/1. Functionally, component of the acetyl coenzyme A carboxylase (ACC) complex. First, biotin carboxylase catalyzes the carboxylation of biotin on its carrier protein (BCCP) and then the CO(2) group is transferred by the carboxyltransferase to acetyl-CoA to form malonyl-CoA. The sequence is that of Acetyl-coenzyme A carboxylase carboxyl transferase subunit alpha from Actinobacillus pleuropneumoniae serotype 5b (strain L20).